Here is a 457-residue protein sequence, read N- to C-terminus: Siroheme synthase (457 aa).

Residues 1 to 204 (MDHLPIFCQL…ADEKAVNATT (204 aa)) form a precorrin-2 dehydrogenase /sirohydrochlorin ferrochelatase region. NAD(+)-binding positions include 22–23 (DV) and 43–44 (LT). Ser-128 is modified (phosphoserine). The tract at residues 216–457 (GEVVLVGAGP…RDKLNWFSNH (242 aa)) is uroporphyrinogen-III C-methyltransferase. Residue Pro-225 coordinates S-adenosyl-L-methionine. Asp-248 serves as the catalytic Proton acceptor. The Proton donor role is filled by Lys-270. Residues 301 to 303 (GGD), Ile-306, 331 to 332 (TA), Met-382, and Gly-411 each bind S-adenosyl-L-methionine.

The protein in the N-terminal section; belongs to the precorrin-2 dehydrogenase / sirohydrochlorin ferrochelatase family. In the C-terminal section; belongs to the precorrin methyltransferase family.

It carries out the reaction uroporphyrinogen III + 2 S-adenosyl-L-methionine = precorrin-2 + 2 S-adenosyl-L-homocysteine + H(+). The enzyme catalyses precorrin-2 + NAD(+) = sirohydrochlorin + NADH + 2 H(+). The catalysed reaction is siroheme + 2 H(+) = sirohydrochlorin + Fe(2+). It functions in the pathway cofactor biosynthesis; adenosylcobalamin biosynthesis; precorrin-2 from uroporphyrinogen III: step 1/1. The protein operates within cofactor biosynthesis; adenosylcobalamin biosynthesis; sirohydrochlorin from precorrin-2: step 1/1. It participates in porphyrin-containing compound metabolism; siroheme biosynthesis; precorrin-2 from uroporphyrinogen III: step 1/1. Its pathway is porphyrin-containing compound metabolism; siroheme biosynthesis; siroheme from sirohydrochlorin: step 1/1. It functions in the pathway porphyrin-containing compound metabolism; siroheme biosynthesis; sirohydrochlorin from precorrin-2: step 1/1. In terms of biological role, multifunctional enzyme that catalyzes the SAM-dependent methylations of uroporphyrinogen III at position C-2 and C-7 to form precorrin-2 via precorrin-1. Then it catalyzes the NAD-dependent ring dehydrogenation of precorrin-2 to yield sirohydrochlorin. Finally, it catalyzes the ferrochelation of sirohydrochlorin to yield siroheme. The protein is Siroheme synthase of Salmonella typhi.